The sequence spans 80 residues: MSGQKYQLVSLLLIICLLFSQSTASGCNFKGSCRTDDQCKRICRGHGLDPSFQLCVPYSSKGGKCCCLHYEGAPLSSEVI.

The signal sequence occupies residues 1 to 24; that stretch reads MSGQKYQLVSLLLIICLLFSQSTA. Intrachain disulfides connect Cys-27/Cys-67, Cys-33/Cys-55, Cys-39/Cys-65, and Cys-43/Cys-66.

It belongs to the DEFL family.

It is found in the secreted. This chain is Defensin-like protein 276, found in Arabidopsis thaliana (Mouse-ear cress).